The primary structure comprises 288 residues: 2-methoxy-6-polyprenyl-1,4-benzoquinol methylase, mitochondrial (288 aa).

The N-terminal 27 residues, 1–27 (MALRSVSRRLGSRILNQRSFVASLHSH), are a transit peptide targeting the mitochondrion. S-adenosyl-L-methionine-binding positions include threonine 94, aspartate 130, and 160-161 (DA).

The protein belongs to the class I-like SAM-binding methyltransferase superfamily. MenG/UbiE family. As to quaternary structure, component of a multi-subunit COQ enzyme complex.

The protein localises to the mitochondrion inner membrane. It carries out the reaction a 2-methoxy-6-(all-trans-polyprenyl)benzene-1,4-diol + S-adenosyl-L-methionine = a 5-methoxy-2-methyl-3-(all-trans-polyprenyl)benzene-1,4-diol + S-adenosyl-L-homocysteine + H(+). The protein operates within cofactor biosynthesis; ubiquinone biosynthesis. Methyltransferase required for the conversion of 2-polyprenyl-6-methoxy-1,4-benzoquinol (DDMQH2) to 2-polyprenyl-3-methyl-6-methoxy-1,4-benzoquinol (DMQH2). This Arabidopsis thaliana (Mouse-ear cress) protein is 2-methoxy-6-polyprenyl-1,4-benzoquinol methylase, mitochondrial.